Consider the following 90-residue polypeptide: Putative defensin-like protein 168 (90 aa).

The first 27 residues, 1–27 (MKYFTLFMISYIFISIFVFSHIHDVEA), serve as a signal peptide directing secretion. Intrachain disulfides connect Cys32/Cys90, Cys43/Cys66, Cys51/Cys84, and Cys64/Cys86.

It belongs to the DEFL family.

It localises to the secreted. The sequence is that of Putative defensin-like protein 168 from Arabidopsis thaliana (Mouse-ear cress).